A 158-amino-acid chain; its full sequence is Sec-independent protein translocase protein TatB (158 aa).

Residues 1–21 (MFDIGWSELLVIGVVALVVVG) traverse the membrane as a helical segment. The interval 73-158 (RSMGLDAMKQ…PAPAEPKSNA (86 aa)) is disordered. A compositionally biased stretch (basic and acidic residues) spans 83–92 (AADRFEKWDP). Low complexity-rich tracts occupy residues 94–132 (KPQQ…SEPA) and 138–158 (APAA…KSNA).

Belongs to the TatB family. As to quaternary structure, the Tat system comprises two distinct complexes: a TatABC complex, containing multiple copies of TatA, TatB and TatC subunits, and a separate TatA complex, containing only TatA subunits. Substrates initially bind to the TatABC complex, which probably triggers association of the separate TatA complex to form the active translocon.

Its subcellular location is the cell inner membrane. Functionally, part of the twin-arginine translocation (Tat) system that transports large folded proteins containing a characteristic twin-arginine motif in their signal peptide across membranes. Together with TatC, TatB is part of a receptor directly interacting with Tat signal peptides. TatB may form an oligomeric binding site that transiently accommodates folded Tat precursor proteins before their translocation. In Cereibacter sphaeroides (strain ATCC 17029 / ATH 2.4.9) (Rhodobacter sphaeroides), this protein is Sec-independent protein translocase protein TatB.